The chain runs to 693 residues: Elongation factor G 1 (693 aa).

The region spanning 4–281 (NKLRNIGISA…AVTRFLPSPH (278 aa)) is the tr-type G domain. Residues 13–20 (AHIDSGKT), 80–84 (DTPGH), and 134–137 (NKCD) each bind GTP.

It belongs to the TRAFAC class translation factor GTPase superfamily. Classic translation factor GTPase family. EF-G/EF-2 subfamily.

The protein localises to the cytoplasm. Its function is as follows. Catalyzes the GTP-dependent ribosomal translocation step during translation elongation. During this step, the ribosome changes from the pre-translocational (PRE) to the post-translocational (POST) state as the newly formed A-site-bound peptidyl-tRNA and P-site-bound deacylated tRNA move to the P and E sites, respectively. Catalyzes the coordinated movement of the two tRNA molecules, the mRNA and conformational changes in the ribosome. The sequence is that of Elongation factor G 1 (fusA) from Borreliella burgdorferi (strain ATCC 35210 / DSM 4680 / CIP 102532 / B31) (Borrelia burgdorferi).